We begin with the raw amino-acid sequence, 338 residues long: Methionine import ATP-binding protein MetN 1 (338 aa).

The ABC transporter domain occupies 2–241; the sequence is IEVRSVTKRF…PHSELGVGLL (240 aa). An ATP-binding site is contributed by 38-45; sequence GQSGAGKT.

It belongs to the ABC transporter superfamily. Methionine importer (TC 3.A.1.24) family. In terms of assembly, the complex is composed of two ATP-binding proteins (MetN), two transmembrane proteins (MetI) and a solute-binding protein (MetQ).

Its subcellular location is the cell membrane. It catalyses the reaction L-methionine(out) + ATP + H2O = L-methionine(in) + ADP + phosphate + H(+). It carries out the reaction D-methionine(out) + ATP + H2O = D-methionine(in) + ADP + phosphate + H(+). Its function is as follows. Part of the ABC transporter complex MetNIQ involved in methionine import. Responsible for energy coupling to the transport system. The polypeptide is Methionine import ATP-binding protein MetN 1 (Rhodococcus jostii (strain RHA1)).